The chain runs to 216 residues: Pyrophosphatase PpaX (216 aa).

Asp-9 functions as the Nucleophile in the catalytic mechanism.

Belongs to the HAD-like hydrolase superfamily. PpaX family. It depends on Mg(2+) as a cofactor.

The enzyme catalyses diphosphate + H2O = 2 phosphate + H(+). Functionally, hydrolyzes pyrophosphate formed during P-Ser-HPr dephosphorylation by HPrK/P. Might play a role in controlling the intracellular pyrophosphate pool. This chain is Pyrophosphatase PpaX, found in Bacillus cereus (strain Q1).